The following is a 381-amino-acid chain: Endophilin-A homolog (381 aa).

Positions 1–21 (MSLSGLRKQFNKANQYLSETM) are membrane-binding amphipathic helix. A BAR domain is found at 18–247 (SETMGAAEPT…LGHRIKDAAA (230 aa)). The stretch at 170 to 238 (CKKRQQRRDD…QCLENLQQQL (69 aa)) forms a coiled coil. The interval 246–323 (AARPREEHVP…PPPLSQQQKP (78 aa)) is disordered. Positions 260–271 (ANESRTPRSSFR) are enriched in polar residues. The segment covering 305–317 (YQGPPPGGLPPPL) has biased composition (pro residues). An SH3 domain is found at 320 to 379 (QQKPQCRALFDFDAQSEGELDFKEGTLIELVSQIDENWYEGRVNGKTGLFPVTYVQVLVP).

It belongs to the endophilin family. As to quaternary structure, may form a homodimer (via the BAR domain). In terms of tissue distribution, expressed in neurons and posterior intestine.

The protein localises to the synapse. It localises to the cytoplasmic vesicle. Its subcellular location is the secretory vesicle. The protein resides in the synaptic vesicle. It is found in the membrane. Involved in synaptic vesicle (SV) recycling in neurons probably by regulating clathrin-mediated endocytosis. By controlling SV endocytosis, regulates the rate of excitatory postsynaptic currents (EPSCs) at neuromuscular junctions and thus locomotion. In a similar manner, involved in necrotic neuronal cell death induced by abnormal hyperactivation of ion channels. Plays a minor role in responses to mechanical stimuli. Plays a minor role in unc-26/synaptojanin localization to synapses. The chain is Endophilin-A homolog from Caenorhabditis elegans.